We begin with the raw amino-acid sequence, 955 residues long: Anoctamin-4 (955 aa).

The Extracellular portion of the chain corresponds to 1-352; that stretch reads MEASSSGITN…FGEKIGLYFA (352 aa). A disordered region spans residues 72 to 100; that stretch reads CKDDDSLLHPGNLTSTSDDASRLEAGGET. N-linked (GlcNAc...) asparagine glycosylation is found at asparagine 83, asparagine 105, asparagine 257, and asparagine 288. The chain crosses the membrane as a helical span at residues 353-373; the sequence is WLGWYTGMLFPAAFIGLFVFL. Over 374-424 the chain is Cytoplasmic; that stretch reads YGVTTLDHSQVSKEVCQATDIIMCPVCDKYCPFMRLSDSCVYAKVTHLFDN. Residues 425–445 traverse the membrane as a helical segment; the sequence is GATVFFAVFMAVWATVFLEFW. Over 446 to 505 the chain is Extracellular; sequence KRRRAVIAYDWDLIDWEEEEEEIRPQFEAKYSKKERMNPISGKPEPYQAFTDKCSRLIVS. A helical membrane pass occupies residues 506–526; sequence ASGIFFMICVVIAAVFGIVIY. Residues 527–547 are Cytoplasmic-facing; the sequence is RVVTVSTFAAFKWALIRNNSQ. A helical membrane pass occupies residues 548–568; it reads VATTGTAVCINFCIIMLLNVL. Topologically, residues 569-595 are extracellular; it reads YEKVALLLTNLEQPRTESEWENSFTLK. Residues 596 to 616 form a helical membrane-spanning segment; that stretch reads MFLFQFVNLNSSTFYIAFFLG. Residues 617-715 lie on the Cytoplasmic side of the membrane; that stretch reads RFTGHPGAYL…AYGLFDEYLE (99 aa). A helical transmembrane segment spans residues 716–736; the sequence is MILQFGFTTIFVAAFPLAPLL. Over 737–768 the chain is Extracellular; the sequence is ALLNNIIEIRLDAYKFVTQWRRPLASRAKDIG. A helical membrane pass occupies residues 769-789; the sequence is IWYGILEGIGILSVITNAFVI. The Cytoplasmic segment spans residues 790 to 885; it reads AITSDFIPRL…QFWHVLAARL (96 aa). Residues 886-906 form a helical membrane-spanning segment; sequence AFIIVFEHLVFCIKHLISYLI. Residues 907–955 lie on the Extracellular side of the membrane; that stretch reads PDLPKDLRDRMRREKYLIQEMMYEAELERLQKERKERKKNGKAHHNEWP.

The protein belongs to the anoctamin family.

Its subcellular location is the cell membrane. The enzyme catalyses a 1,2-diacyl-sn-glycero-3-phospho-L-serine(in) = a 1,2-diacyl-sn-glycero-3-phospho-L-serine(out). The catalysed reaction is a beta-D-galactosyl-(1&lt;-&gt;1')-N-acylsphing-4-enine(out) = a beta-D-galactosyl-(1&lt;-&gt;1')-N-acylsphing-4-enine(in). It catalyses the reaction a 1,2-diacyl-sn-glycero-3-phosphocholine(in) = a 1,2-diacyl-sn-glycero-3-phosphocholine(out). Functionally, has calcium-dependent phospholipid scramblase activity; scrambles phosphatidylserine, phosphatidylcholine and galactosylceramide. Does not exhibit calcium-activated chloride channel (CaCC) activity. The polypeptide is Anoctamin-4 (ANO4) (Homo sapiens (Human)).